Reading from the N-terminus, the 268-residue chain is Thiazole synthase (268 aa).

Lys111 (schiff-base intermediate with DXP) is an active-site residue. Residues Gly172, 198–199, and 220–221 each bind 1-deoxy-D-xylulose 5-phosphate; these read AG and NT.

This sequence belongs to the ThiG family. In terms of assembly, homotetramer. Forms heterodimers with either ThiH or ThiS.

The protein resides in the cytoplasm. The catalysed reaction is [ThiS sulfur-carrier protein]-C-terminal-Gly-aminoethanethioate + 2-iminoacetate + 1-deoxy-D-xylulose 5-phosphate = [ThiS sulfur-carrier protein]-C-terminal Gly-Gly + 2-[(2R,5Z)-2-carboxy-4-methylthiazol-5(2H)-ylidene]ethyl phosphate + 2 H2O + H(+). It participates in cofactor biosynthesis; thiamine diphosphate biosynthesis. Catalyzes the rearrangement of 1-deoxy-D-xylulose 5-phosphate (DXP) to produce the thiazole phosphate moiety of thiamine. Sulfur is provided by the thiocarboxylate moiety of the carrier protein ThiS. In vitro, sulfur can be provided by H(2)S. This is Thiazole synthase from Caulobacter sp. (strain K31).